Here is a 142-residue protein sequence, read N- to C-terminus: Large ribosomal subunit protein uL13 (142 aa).

Belongs to the universal ribosomal protein uL13 family. Part of the 50S ribosomal subunit.

Functionally, this protein is one of the early assembly proteins of the 50S ribosomal subunit, although it is not seen to bind rRNA by itself. It is important during the early stages of 50S assembly. This Treponema denticola (strain ATCC 35405 / DSM 14222 / CIP 103919 / JCM 8153 / KCTC 15104) protein is Large ribosomal subunit protein uL13.